A 475-amino-acid chain; its full sequence is Glycogen synthase (475 aa).

Lys15 provides a ligand contact to ADP-alpha-D-glucose.

It belongs to the glycosyltransferase 1 family. Bacterial/plant glycogen synthase subfamily.

It carries out the reaction [(1-&gt;4)-alpha-D-glucosyl](n) + ADP-alpha-D-glucose = [(1-&gt;4)-alpha-D-glucosyl](n+1) + ADP + H(+). It functions in the pathway glycan biosynthesis; glycogen biosynthesis. Functionally, synthesizes alpha-1,4-glucan chains using ADP-glucose. This Kosmotoga olearia (strain ATCC BAA-1733 / DSM 21960 / TBF 19.5.1) protein is Glycogen synthase.